A 141-amino-acid chain; its full sequence is Cystatin-S (141 aa).

An N-terminal signal peptide occupies residues 1–27; that stretch reads MAYLLHAQLFLLTTFILVLNMRLCPVL. The Secondary area of contact motif lies at 76–80; it reads QVVAG. 2 disulfide bridges follow: cysteine 94–cysteine 104 and cysteine 118–cysteine 138.

It belongs to the cystatin family. Found in saliva, tears, urine and seminal fluid.

It is found in the secreted. Its function is as follows. This protein strongly inhibits papain and ficin, partially inhibits stem bromelain and bovine cathepsin C, but does not inhibit porcine cathepsin B or clostripain. Papain is inhibited non-competitively. The polypeptide is Cystatin-S (Cst4) (Rattus norvegicus (Rat)).